Reading from the N-terminus, the 245-residue chain is Endonuclease III (245 aa).

Residues 119 to 138 (MVDLFTLPGVGRKTANVILG) enclose the HhH domain. [4Fe-4S] cluster-binding residues include C198, C205, C208, and C214.

The protein belongs to the Nth/MutY family. It depends on [4Fe-4S] cluster as a cofactor.

The enzyme catalyses 2'-deoxyribonucleotide-(2'-deoxyribose 5'-phosphate)-2'-deoxyribonucleotide-DNA = a 3'-end 2'-deoxyribonucleotide-(2,3-dehydro-2,3-deoxyribose 5'-phosphate)-DNA + a 5'-end 5'-phospho-2'-deoxyribonucleoside-DNA + H(+). In terms of biological role, DNA repair enzyme that has both DNA N-glycosylase activity and AP-lyase activity. The DNA N-glycosylase activity releases various damaged pyrimidines from DNA by cleaving the N-glycosidic bond, leaving an AP (apurinic/apyrimidinic) site. The AP-lyase activity cleaves the phosphodiester bond 3' to the AP site by a beta-elimination, leaving a 3'-terminal unsaturated sugar and a product with a terminal 5'-phosphate. This is Endonuclease III from Mycobacterium leprae (strain TN).